The following is a 171-amino-acid chain: Tetratricopeptide repeat protein 9C (171 aa).

3 TPR repeats span residues 8 to 41, 72 to 107, and 108 to 141; these read AQVY…LRGL, THCY…QPDN, and AKAL…QPKD.

It belongs to the TTC9 family.

The protein is Tetratricopeptide repeat protein 9C (Ttc9c) of Mus musculus (Mouse).